The chain runs to 226 residues: Leucyl/phenylalanyl-tRNA--protein transferase (226 aa).

It belongs to the L/F-transferase family.

The protein resides in the cytoplasm. The enzyme catalyses N-terminal L-lysyl-[protein] + L-leucyl-tRNA(Leu) = N-terminal L-leucyl-L-lysyl-[protein] + tRNA(Leu) + H(+). It carries out the reaction N-terminal L-arginyl-[protein] + L-leucyl-tRNA(Leu) = N-terminal L-leucyl-L-arginyl-[protein] + tRNA(Leu) + H(+). It catalyses the reaction L-phenylalanyl-tRNA(Phe) + an N-terminal L-alpha-aminoacyl-[protein] = an N-terminal L-phenylalanyl-L-alpha-aminoacyl-[protein] + tRNA(Phe). Its function is as follows. Functions in the N-end rule pathway of protein degradation where it conjugates Leu, Phe and, less efficiently, Met from aminoacyl-tRNAs to the N-termini of proteins containing an N-terminal arginine or lysine. This chain is Leucyl/phenylalanyl-tRNA--protein transferase, found in Ectopseudomonas mendocina (strain ymp) (Pseudomonas mendocina).